An 89-amino-acid polypeptide reads, in one-letter code: Small ribosomal subunit protein uS15 (89 aa).

The span at 1–13 (MTISKERKEEVIS) shows a compositional bias: basic and acidic residues. Residues 1-24 (MTISKERKEEVISEHGAAAGDTGS) form a disordered region.

It belongs to the universal ribosomal protein uS15 family. Part of the 30S ribosomal subunit. Forms a bridge to the 50S subunit in the 70S ribosome, contacting the 23S rRNA.

One of the primary rRNA binding proteins, it binds directly to 16S rRNA where it helps nucleate assembly of the platform of the 30S subunit by binding and bridging several RNA helices of the 16S rRNA. Its function is as follows. Forms an intersubunit bridge (bridge B4) with the 23S rRNA of the 50S subunit in the ribosome. The polypeptide is Small ribosomal subunit protein uS15 (Rhodopirellula baltica (strain DSM 10527 / NCIMB 13988 / SH1)).